The primary structure comprises 139 residues: Large ribosomal subunit protein uL16 (139 aa).

Belongs to the universal ribosomal protein uL16 family. As to quaternary structure, part of the 50S ribosomal subunit.

In terms of biological role, binds 23S rRNA and is also seen to make contacts with the A and possibly P site tRNAs. This Chlorobium phaeobacteroides (strain DSM 266 / SMG 266 / 2430) protein is Large ribosomal subunit protein uL16.